The following is a 306-amino-acid chain: D-alanine--D-alanine ligase (306 aa).

Residues E15 and S150 contribute to the active site. Residues 101–303 (KLLWKSLSLR…FDELILKILK (203 aa)) form the ATP-grasp domain. 134 to 189 (ILKLKFPVVIKPNNAGSSIGITIVNHPDLLIDSINLAFNYSNNIIIEKFLKGTEYT) is a binding site for ATP. Mg(2+)-binding residues include D257, E270, and N272. Residue S281 is part of the active site.

Belongs to the D-alanine--D-alanine ligase family. Requires Mg(2+) as cofactor. It depends on Mn(2+) as a cofactor.

Its subcellular location is the cytoplasm. The catalysed reaction is 2 D-alanine + ATP = D-alanyl-D-alanine + ADP + phosphate + H(+). The protein operates within cell wall biogenesis; peptidoglycan biosynthesis. Its function is as follows. Cell wall formation. This Buchnera aphidicola subsp. Schizaphis graminum (strain Sg) protein is D-alanine--D-alanine ligase.